The chain runs to 121 residues: Small ribosomal subunit protein uS13 (121 aa).

A disordered region spans residues 91–121; that stretch reads HRRGLPVRGQNSKNNARTRKGPRRTVANKKK. Residues 106–121 show a composition bias toward basic residues; it reads ARTRKGPRRTVANKKK.

It belongs to the universal ribosomal protein uS13 family. In terms of assembly, part of the 30S ribosomal subunit. Forms a loose heterodimer with protein S19. Forms two bridges to the 50S subunit in the 70S ribosome.

Functionally, located at the top of the head of the 30S subunit, it contacts several helices of the 16S rRNA. In the 70S ribosome it contacts the 23S rRNA (bridge B1a) and protein L5 of the 50S subunit (bridge B1b), connecting the 2 subunits; these bridges are implicated in subunit movement. Contacts the tRNAs in the A and P-sites. In Bacillus cereus (strain G9842), this protein is Small ribosomal subunit protein uS13.